The following is a 178-amino-acid chain: MDKTDQTAIDESALVLNRTEKSAEAVLRVASMALSITGLVIMIKNSISNEFGSVSYSNIGAFMYLVSANGVCAAYSLLSALAILALPCPISKVQVRTLFLLDQVVTYVVLAAGAVSAETVYLAYYGNIPITWSSACDSYGSFCHNALISVVFTFVVSLLYMLLSLISSYRLFTRFEAP.

Residues 1–22 are Cytoplasmic-facing; that stretch reads MDKTDQTAIDESALVLNRTEKS. A helical membrane pass occupies residues 23–43; sequence AEAVLRVASMALSITGLVIMI. Over 44 to 69 the chain is Extracellular; sequence KNSISNEFGSVSYSNIGAFMYLVSAN. Residues 70-90 form a helical membrane-spanning segment; the sequence is GVCAAYSLLSALAILALPCPI. Over 91–96 the chain is Cytoplasmic; that stretch reads SKVQVR. A helical transmembrane segment spans residues 97–117; it reads TLFLLDQVVTYVVLAAGAVSA. The Extracellular portion of the chain corresponds to 118–145; that stretch reads ETVYLAYYGNIPITWSSACDSYGSFCHN. A helical transmembrane segment spans residues 146–166; the sequence is ALISVVFTFVVSLLYMLLSLI. Topologically, residues 167-178 are cytoplasmic; sequence SSYRLFTRFEAP.

It belongs to the Casparian strip membrane proteins (CASP) family. In terms of assembly, homodimer and heterodimers. Mostly expressed in flowers and buds and, to a lower extent, in roots and yellow siliques. Localized in the floral organ abscission zone.

It is found in the cell membrane. Its function is as follows. Involved in floral organ shedding. This Arabidopsis thaliana (Mouse-ear cress) protein is CASP-like protein 2A2.